The following is a 434-amino-acid chain: Cyclic 2,3-diphosphoglycerate synthetase (434 aa).

It belongs to the cyclic 2,3-diphosphoglycerate synthetase family.

The protein localises to the cytoplasm. It carries out the reaction (2R)-2,3-bisphosphoglycerate + ATP + H(+) = cyclic (2R)-2,3-bisphosphoglycerate + ADP + phosphate. In terms of biological role, catalyzes the formation of cyclic 2,3-diphosphoglycerate (cDPG) by formation of an intramolecular phosphoanhydride bond at the expense of ATP. This is Cyclic 2,3-diphosphoglycerate synthetase from Thermococcus sibiricus (strain DSM 12597 / MM 739).